The following is a 134-amino-acid chain: Profilin (134 aa).

It belongs to the profilin family. In terms of assembly, occurs in many kinds of cells as a complex with monomeric actin in a 1:1 ratio.

It localises to the cytoplasm. Its subcellular location is the cytoskeleton. Functionally, binds to actin and affects the structure of the cytoskeleton. At high concentrations, profilin prevents the polymerization of actin, whereas it enhances it at low concentrations. By binding to PIP2, it inhibits the formation of IP3 and DG. The chain is Profilin from Daucus carota (Wild carrot).